The primary structure comprises 75 residues: MKLCATFLLVLVTLPLVTGEKSSERSLSGAILRGVRRTCSRRGHRCIRDSQCCGGMCCQGNRCFVAIRRCFHLPF.

The N-terminal stretch at 1–19 is a signal peptide; the sequence is MKLCATFLLVLVTLPLVTG. A propeptide spanning residues 20–36 is cleaved from the precursor; it reads EKSSERSLSGAILRGVR. Disulfide bonds link Cys-39–Cys-53, Cys-46–Cys-58, Cys-52–Cys-63, and Cys-57–Cys-70.

Expressed by the venom duct.

It localises to the secreted. In terms of biological role, both natural (L-Leu form) and synthetic (D-Leu from) peptides equally cause sensitivity to touch and body tremor. Neither L-Leu form nor D-Leu form is active on nerve-muscle preparation. This chain is Conotoxin ar11a, found in Conus arenatus (Sand-dusted cone).